Consider the following 137-residue polypeptide: Immunoglobulin domain-containing protein oig-1 (137 aa).

Residues 1-23 (MFSELRILRDILLLCFLSVGINA) form the signal peptide. Positions 41-133 (PKISRSSYFK…KGSRVKKFLT (93 aa)) constitute an Ig-like C2-type domain. Cys-63 and Cys-118 are joined by a disulfide.

Expressed in DD and VD GABAergic motor neurons. Expressed in a subset of head neurons including M2 motor neurons in the pharynx. Expressed in coelomocytes.

The protein localises to the membrane. It is found in the secreted. It localises to the extracellular space. The protein resides in the cell projection. Its subcellular location is the dendrite. The protein localises to the axon. In terms of biological role, plays a role in neural development, where it temporally regulates synapse formation in the D-type inhibitory GABAergic motor neurons, dorsal D (DD) and ventral D (VD) motor neurons. Controls the translocation of postsynaptic proteins, such as the acetylcholine receptor subunit acr-12, and presynaptic proteins, such as snb-1, along nerve cords to prevent premature synapse remodeling/formation. This Caenorhabditis elegans protein is Immunoglobulin domain-containing protein oig-1.